Reading from the N-terminus, the 134-residue chain is Urease subunit beta (134 aa).

The protein belongs to the urease beta subunit family. As to quaternary structure, heterotrimer of UreA (gamma), UreB (beta) and UreC (alpha) subunits. Three heterotrimers associate to form the active enzyme.

It localises to the cytoplasm. The enzyme catalyses urea + 2 H2O + H(+) = hydrogencarbonate + 2 NH4(+). The protein operates within nitrogen metabolism; urea degradation; CO(2) and NH(3) from urea (urease route): step 1/1. This chain is Urease subunit beta, found in Staphylococcus saprophyticus subsp. saprophyticus (strain ATCC 15305 / DSM 20229 / NCIMB 8711 / NCTC 7292 / S-41).